Reading from the N-terminus, the 185-residue chain is dTTP/UTP pyrophosphatase (185 aa).

Catalysis depends on Asp67, which acts as the Proton acceptor.

This sequence belongs to the Maf family. YhdE subfamily. Requires a divalent metal cation as cofactor.

It is found in the cytoplasm. It catalyses the reaction dTTP + H2O = dTMP + diphosphate + H(+). The catalysed reaction is UTP + H2O = UMP + diphosphate + H(+). Functionally, nucleoside triphosphate pyrophosphatase that hydrolyzes dTTP and UTP. May have a dual role in cell division arrest and in preventing the incorporation of modified nucleotides into cellular nucleic acids. The polypeptide is dTTP/UTP pyrophosphatase (Lacticaseibacillus casei (strain BL23) (Lactobacillus casei)).